Reading from the N-terminus, the 386-residue chain is Histidine decarboxylase (386 aa).

Residue histidine 120 participates in substrate binding. Lysine 233 carries the post-translational modification N6-(pyridoxal phosphate)lysine.

This sequence belongs to the group II decarboxylase family. As to quaternary structure, homotetramer. The cofactor is pyridoxal 5'-phosphate.

The enzyme catalyses L-histidine + H(+) = histamine + CO2. This chain is Histidine decarboxylase, found in Vibrio campbellii (strain ATCC BAA-1116).